The primary structure comprises 163 residues: Phosphopantetheine adenylyltransferase (163 aa).

Ser-9 is a substrate binding site. ATP contacts are provided by residues 9–10 (SF) and His-17. Substrate contacts are provided by Lys-41, Ile-75, and Arg-89. ATP-binding positions include 90 to 92 (GIR), Glu-100, and 125 to 131 (HLYVRSD).

The protein belongs to the bacterial CoaD family. Homohexamer. Mg(2+) serves as cofactor.

It localises to the cytoplasm. It catalyses the reaction (R)-4'-phosphopantetheine + ATP + H(+) = 3'-dephospho-CoA + diphosphate. It participates in cofactor biosynthesis; coenzyme A biosynthesis; CoA from (R)-pantothenate: step 4/5. In terms of biological role, reversibly transfers an adenylyl group from ATP to 4'-phosphopantetheine, yielding dephospho-CoA (dPCoA) and pyrophosphate. The sequence is that of Phosphopantetheine adenylyltransferase from Borreliella burgdorferi (strain ZS7) (Borrelia burgdorferi).